Reading from the N-terminus, the 96-residue chain is Protein RnfH (96 aa).

Belongs to the UPF0125 (RnfH) family.

The sequence is that of Protein RnfH from Escherichia fergusonii (strain ATCC 35469 / DSM 13698 / CCUG 18766 / IAM 14443 / JCM 21226 / LMG 7866 / NBRC 102419 / NCTC 12128 / CDC 0568-73).